The chain runs to 83 residues: Mu-theraphotoxin-Hhn2j 1 (83 aa).

Residues 1–21 form the signal peptide; sequence MKASMFLALAGLVLLFVVGYA. The propeptide occupies 22–48; sequence SESEEKEFPIELLSKIFAVDVFKGEER. 3 disulfides stabilise this stretch: cysteine 50-cysteine 65, cysteine 57-cysteine 70, and cysteine 64-cysteine 77. Leucine 81 carries the leucine amide modification.

It belongs to the neurotoxin 10 (Hwtx-1) family. 15 (Hntx-3) subfamily. Monomer. In terms of tissue distribution, expressed by the venom gland.

It localises to the secreted. In terms of biological role, lethal neurotoxin. Selectively blocks tetrodotoxin-sensitive voltage-gated sodium channels (Nav). Does not affect tetrodotoxin-resistant voltage-gated sodium channels or calcium channels. This is Mu-theraphotoxin-Hhn2j 1 from Cyriopagopus hainanus (Chinese bird spider).